The primary structure comprises 119 residues: Ribonuclease P protein component (119 aa).

This sequence belongs to the RnpA family. As to quaternary structure, consists of a catalytic RNA component (M1 or rnpB) and a protein subunit.

The catalysed reaction is Endonucleolytic cleavage of RNA, removing 5'-extranucleotides from tRNA precursor.. Its function is as follows. RNaseP catalyzes the removal of the 5'-leader sequence from pre-tRNA to produce the mature 5'-terminus. It can also cleave other RNA substrates such as 4.5S RNA. The protein component plays an auxiliary but essential role in vivo by binding to the 5'-leader sequence and broadening the substrate specificity of the ribozyme. The chain is Ribonuclease P protein component from Escherichia coli O157:H7.